The sequence spans 208 residues: MKIVEVKHPLVKHKLGLMRENDISTKRFRELASEVGSLLTYEATADLATEKVTIDGWCGPVEVDQIKGKKITVVPILRAGLGMMDGVLENVPSARISVVGIYRDEETLEPVPYFQKLVSNIEERMALVVDPMLATGGSMIATIDLLKKAGCHSIKVLVLVAAPEGIAALEKAHPDVELYTASIDKGLNEQGYIMPGLGDAGDKIFGTK.

5-phospho-alpha-D-ribose 1-diphosphate-binding positions include R78, R103, and 130–138 (DPMLATGGS). Uracil-binding positions include I193 and 198 to 200 (GDA). A 5-phospho-alpha-D-ribose 1-diphosphate-binding site is contributed by D199.

The protein belongs to the UPRTase family. Requires Mg(2+) as cofactor.

The catalysed reaction is UMP + diphosphate = 5-phospho-alpha-D-ribose 1-diphosphate + uracil. It functions in the pathway pyrimidine metabolism; UMP biosynthesis via salvage pathway; UMP from uracil: step 1/1. Its activity is regulated as follows. Allosterically activated by GTP. Functionally, catalyzes the conversion of uracil and 5-phospho-alpha-D-ribose 1-diphosphate (PRPP) to UMP and diphosphate. The protein is Uracil phosphoribosyltransferase of Pectobacterium atrosepticum (strain SCRI 1043 / ATCC BAA-672) (Erwinia carotovora subsp. atroseptica).